Here is a 296-residue protein sequence, read N- to C-terminus: Ribonuclease HIII (296 aa).

Positions 80 to 296 constitute an RNase H type-2 domain; it reads LALIGSDEVG…NTKKAYQRLK (217 aa). Residues Asp-86, Glu-87, and Asp-191 each contribute to the a divalent metal cation site.

This sequence belongs to the RNase HII family. RnhC subfamily. Mn(2+) serves as cofactor. Requires Mg(2+) as cofactor.

It is found in the cytoplasm. It carries out the reaction Endonucleolytic cleavage to 5'-phosphomonoester.. Its function is as follows. Endonuclease that specifically degrades the RNA of RNA-DNA hybrids. The protein is Ribonuclease HIII of Streptococcus thermophilus (strain ATCC BAA-250 / LMG 18311).